A 120-amino-acid polypeptide reads, in one-letter code: MVKLTSIAAGVAAIAAGASATTTLAQSDERVNLVELGVYVSDIRAHLAQYYMFQAAHPTETYPVEVAEAVFNYGDFTTMLTGISPDQVTRMITGVPWYSTRLKPAISKALSKDGIYTIAN.

The chain crosses the membrane as a helical span at residues 7 to 25 (IAAGVAAIAAGASATTTLA).

Belongs to the SRP1/TIP1 family. Seripauperin subfamily.

It localises to the membrane. In Saccharomyces cerevisiae (strain ATCC 204508 / S288c) (Baker's yeast), this protein is Seripauperin-20 (PAU20).